We begin with the raw amino-acid sequence, 361 residues long: MLLWLADWLGEYVRAFNVFNYVTLRAVLASLTALGIGLALGPWVIRKLAELKVGQAVRTDGPQTHLVKTGTPTMGGTLILLSIGITTLLWADLTNKYVWLLLAVLFGTGAIGFYDDWRKVVYKDPKGISARAKMFWQSAIAIFAGIYLISTASLPAATELIVPFFKHVIYPFGVVGFCILTYFVIVGTSNAVNLTDGLDGLAAMPVVMVSAALAVFAYVAGNSVFASYLSLPHIPGAHEVAVFCAAMAGACLAFLWFNAYPAQVFMGDVGALALGAALGTVAVIVRQEIVLFVMGGLFVMEALSVMIQVASFKLTGKRVFRMAPLHHHFELKGWKETQVVVRFWIITMMLVLAGLSTLKLR.

The next 10 membrane-spanning stretches (helical) occupy residues 25-45 (RAVLASLTALGIGLALGPWVI), 73-93 (TMGGTLILLSIGITTLLWADL), 97-117 (YVWLLLAVLFGTGAIGFYDDW), 134-154 (MFWQSAIAIFAGIYLISTASL), 168-188 (VIYPFGVVGFCILTYFVIVGT), 200-220 (GLAAMPVVMVSAALAVFAYVA), 240-260 (VAVFCAAMAGACLAFLWFNAY), 264-284 (VFMGDVGALALGAALGTVAVI), 289-309 (IVLFVMGGLFVMEALSVMIQV), and 338-358 (QVVVRFWIITMMLVLAGLSTL).

The protein belongs to the glycosyltransferase 4 family. MraY subfamily. Mg(2+) is required as a cofactor.

The protein localises to the cell inner membrane. The catalysed reaction is UDP-N-acetyl-alpha-D-muramoyl-L-alanyl-gamma-D-glutamyl-meso-2,6-diaminopimeloyl-D-alanyl-D-alanine + di-trans,octa-cis-undecaprenyl phosphate = di-trans,octa-cis-undecaprenyl diphospho-N-acetyl-alpha-D-muramoyl-L-alanyl-D-glutamyl-meso-2,6-diaminopimeloyl-D-alanyl-D-alanine + UMP. The protein operates within cell wall biogenesis; peptidoglycan biosynthesis. Functionally, catalyzes the initial step of the lipid cycle reactions in the biosynthesis of the cell wall peptidoglycan: transfers peptidoglycan precursor phospho-MurNAc-pentapeptide from UDP-MurNAc-pentapeptide onto the lipid carrier undecaprenyl phosphate, yielding undecaprenyl-pyrophosphoryl-MurNAc-pentapeptide, known as lipid I. The polypeptide is Phospho-N-acetylmuramoyl-pentapeptide-transferase (Laribacter hongkongensis (strain HLHK9)).